Reading from the N-terminus, the 811-residue chain is MSASCLRLLTLSLFILGQCNVTAAQNGVDDEVTTVTAILDSATTAAADNSTVPTQSASNNNTSQSSKIPTIFGMRVELPADDPFGYDKHGVCSVTPEEEFKVVIYGNHLDKIHQIIWTFTNNCSEPAYVIDALNHFKVHFNHKATFHLTLKLLPEMVHAYKMCVKPKVAPGSPPLGEIYPLDDISTWLTTERPPKEYFLPLPLQIACIGFLLCLSALFSGLTLGLMSLTPQELELVIKSGAIKEQKCAAKILPVRKKGNLLLCSLLLGNVIVNSAISILMGELTTGIYALIGSTMGIVIFGEILPQSICVKKGLEVGAHTISITQLFIFLTFPIAWPVSKLLDCLLGDEYQAYDRKRLMELIKMSITDNGQVSNELKIAVGAMEIADKVVKDVMTKIEDVFMLPDTTVLNAKTVMEIVKMGYTRIPVYQYGDKNNVTDMLFVKDLALLDPDDNFTVKTVCGYHKHPVKFVMNDTPLPNLLEAFKKGEGHLAMVKRLINTDDKHDPSYVLVGVVTLEDIVEEILQAEINDEFDIVSDNVNKVKIKKEQNRDATKYFGDHEAPQTMISMQLQMVALQWLVSNERGFRQEFLDTNVLERLIRSSARRVDVSALMAMGDDAINVPRLAKVYTKDELSDKYILILEGRIQVTIGASGMMFEAGPWHHFGGEIMAKLVDGAATLGRSMSIVGTSELSARRPDLMFKPDYSAVVKEDCTYLEISVSAYINAYKASLMQRERPLNDLSDVSHNSSAHNSNLSLVEKPGPITDPSAMLVPENVRKPSVVSMDSPKILVGLGQHPVAPVAEEEEMALLDQP.

The first 24 residues, 1–24 (MSASCLRLLTLSLFILGQCNVTAA), serve as a signal peptide directing secretion. 4 N-linked (GlcNAc...) asparagine glycosylation sites follow: Asn-20, Asn-49, Asn-61, and Asn-122. Residues 25–204 (QNGVDDEVTT…KEYFLPLPLQ (180 aa)) lie on the Extracellular side of the membrane. The CNNM transmembrane domain maps to 197–376 (YFLPLPLQIA…TDNGQVSNEL (180 aa)). The chain crosses the membrane as a helical span at residues 205-225 (IACIGFLLCLSALFSGLTLGL). At 226-259 (MSLTPQELELVIKSGAIKEQKCAAKILPVRKKGN) the chain is on the cytoplasmic side. A helical transmembrane segment spans residues 260 to 280 (LLLCSLLLGNVIVNSAISILM). Residues 281 to 284 (GELT) are Extracellular-facing. A helical membrane pass occupies residues 285 to 305 (TGIYALIGSTMGIVIFGEILP). Residues 306 to 315 (QSICVKKGLE) lie on the Cytoplasmic side of the membrane. Residues 316 to 336 (VGAHTISITQLFIFLTFPIAW) form a helical membrane-spanning segment. The Extracellular portion of the chain corresponds to 337 to 811 (PVSKLLDCLL…EEEMALLDQP (475 aa)). CBS domains follow at residues 394 to 456 (MTKI…NFTV) and 462 to 530 (YHKH…INDE). Residues Asn-435 and Asn-453 are each glycosylated (N-linked (GlcNAc...) asparagine). Residues 741-760 (DVSHNSSAHNSNLSLVEKPG) are disordered. Over residues 743–755 (SHNSSAHNSNLSL) the composition is skewed to low complexity. N-linked (GlcNAc...) asparagine glycans are attached at residues Asn-745 and Asn-752.

The protein belongs to the ACDP family. Highly expressed in the intestine and in neurons, but it is also expressed in a variety of tissues including the pharynx, hypodermis, rectum and in muscles.

It localises to the basolateral cell membrane. In terms of biological role, probable metal transporter. Probably acts redundantly with the other metal transport proteins cnnm-2, cnnm-3, cnnm-4 and cnnm-5 to regulate Mg(2+) homeostasis. Promotes postembryonic gonad development by regulating Mg(2+) levels, probably via AMPK signaling. The polypeptide is Metal transporter cnnm-1 (Caenorhabditis elegans).